The sequence spans 222 residues: Probable nicotinate-nucleotide adenylyltransferase (222 aa).

This sequence belongs to the NadD family.

It carries out the reaction nicotinate beta-D-ribonucleotide + ATP + H(+) = deamido-NAD(+) + diphosphate. The protein operates within cofactor biosynthesis; NAD(+) biosynthesis; deamido-NAD(+) from nicotinate D-ribonucleotide: step 1/1. In terms of biological role, catalyzes the reversible adenylation of nicotinate mononucleotide (NaMN) to nicotinic acid adenine dinucleotide (NaAD). This Stenotrophomonas maltophilia (strain K279a) protein is Probable nicotinate-nucleotide adenylyltransferase.